A 118-amino-acid chain; its full sequence is V-type proton ATPase subunit G 1 (118 aa).

At alanine 2 the chain carries N-acetylalanine. Residues 25-90 form a disordered region; sequence ARKRKARRLK…VQGMQSSQQR (66 aa). Residues 35 to 56 are compositionally biased toward basic and acidic residues; sequence QAKEEAQMEVEQYRREREHEFQ. Polar residues-rich tracts occupy residues 57 to 69 and 78 to 89; these read SKQQAAMGSQGNL and RHQVQGMQSSQQ.

This sequence belongs to the V-ATPase G subunit family. V-ATPase is a heteromultimeric enzyme made up of two complexes: the ATP-hydrolytic V1 complex and the proton translocation V0 complex. The V1 complex consists of three catalytic AB heterodimers that form a heterohexamer, three peripheral stalks each consisting of EG heterodimers, one central rotor including subunits D and F, and the regulatory subunits C and H. The proton translocation complex V0 consists of the proton transport subunit a, a ring of proteolipid subunits c9c'', rotary subunit d, subunits e and f, and the accessory subunits ATP6AP1/Ac45 and ATP6AP2/PRR.

The protein resides in the apical cell membrane. Subunit of the V1 complex of vacuolar(H+)-ATPase (V-ATPase), a multisubunit enzyme composed of a peripheral complex (V1) that hydrolyzes ATP and a membrane integral complex (V0) that translocates protons. V-ATPase is responsible for acidifying and maintaining the pH of intracellular compartments and in some cell types, is targeted to the plasma membrane, where it is responsible for acidifying the extracellular environment. In aerobic conditions, involved in intracellular iron homeostasis, thus triggering the activity of Fe(2+) prolyl hydroxylase (PHD) enzymes, and leading to HIF1A hydroxylation and subsequent proteasomal degradation. This Pan troglodytes (Chimpanzee) protein is V-type proton ATPase subunit G 1 (ATP6V1G1).